We begin with the raw amino-acid sequence, 107 residues long: Heme-degrading monooxygenase (107 aa).

The 93-residue stretch at 2–94 (IIVTNTAKIT…YILDNKISYY (93 aa)) folds into the ABM domain. Asn6 serves as a coordination point for Fe cation. Heme is bound at residue His76.

The protein belongs to the antibiotic biosynthesis monooxygenase family. Heme-degrading monooxygenase IsdG subfamily. As to quaternary structure, homodimer.

The protein localises to the cytoplasm. It carries out the reaction heme b + 3 reduced [NADPH--hemoprotein reductase] + 3 O2 = biliverdin IXalpha + CO + Fe(2+) + 3 oxidized [NADPH--hemoprotein reductase] + 3 H2O + H(+). In terms of biological role, allows bacterial pathogens to use the host heme as an iron source. Catalyzes the oxidative degradation of the heme macrocyclic porphyrin ring to the biliverdin in the presence of a suitable electron donor such as ascorbate or NADPH--cytochrome P450 reductase, with subsequent release of free iron. This chain is Heme-degrading monooxygenase, found in Bacillus cereus (strain AH187).